Reading from the N-terminus, the 37-residue chain is Large ribosomal subunit protein bL36c (37 aa).

The protein belongs to the bacterial ribosomal protein bL36 family.

It is found in the plastid. Its subcellular location is the chloroplast. The polypeptide is Large ribosomal subunit protein bL36c (Tetradesmus obliquus (Green alga)).